Here is a 139-residue protein sequence, read N- to C-terminus: Small ribosomal subunit protein uS12 (139 aa).

The tract at residues 1–21 (MSTVSQLIKKRRSSKTSKTKA) is disordered. Positions 8-18 (IKKRRSSKTSK) are enriched in basic residues. Aspartate 102 bears the 3-methylthioaspartic acid mark.

It belongs to the universal ribosomal protein uS12 family. Part of the 30S ribosomal subunit. Contacts proteins S8 and S17. May interact with IF1 in the 30S initiation complex.

With S4 and S5 plays an important role in translational accuracy. In terms of biological role, interacts with and stabilizes bases of the 16S rRNA that are involved in tRNA selection in the A site and with the mRNA backbone. Located at the interface of the 30S and 50S subunits, it traverses the body of the 30S subunit contacting proteins on the other side and probably holding the rRNA structure together. The combined cluster of proteins S8, S12 and S17 appears to hold together the shoulder and platform of the 30S subunit. The protein is Small ribosomal subunit protein uS12 of Aster yellows witches'-broom phytoplasma (strain AYWB).